Here is a 1299-residue protein sequence, read N- to C-terminus: Tubulin polyglutamylase TTLL5 (1299 aa).

The region spanning 62-407 (RYHLSYKIVR…VCQDPAQRAS (346 aa)) is the TTL domain. ATP is bound by residues lysine 180, 186 to 187 (RG), 208 to 211 (SRYI), and 221 to 223 (KFD). Arginine 186 contacts a protein. Arginine 247 provides a ligand contact to L-glutamate. 268–269 (TN) lines the ATP pocket. Positions 270, 271, and 293 each coordinate L-glutamate. 3 residues coordinate Mg(2+): aspartate 353, glutamate 366, and asparagine 368. The segment at 378 to 488 (PLDLKIKASM…RGGFIRIFPT (111 aa)) is c-MTBD region. Residue lysine 384 participates in L-glutamate binding. Disordered stretches follow at residues 589-626 (EMNVKTETESEEEEEVALDNEEEEQEASQEESAGFLRE), 832-853 (GTHSKSSKNNNSYSDSGAKGDH), 918-941 (SSVTTSDLSPGPGHHSSLSQIPSA), 1088-1130 (RSSA…RSLQ), and 1217-1275 (SSAT…QLNG). The span at 597–617 (ESEEEEEVALDNEEEEQEASQ) shows a compositional bias: acidic residues. Residues 838–847 (SKNNNSYSDS) are compositionally biased toward low complexity. Composition is skewed to polar residues over residues 1104–1130 (SGPTWSTQSDPQAPENHSSPPGSRSLQ), 1217–1230 (SSATASGQKPTTLP), and 1258–1275 (ATSQRASKGSSAEGQLNG).

It belongs to the tubulin--tyrosine ligase family. Interacts with the transcriptional coactivators NCOA1/SRC-1 and NCOA2/TIF2. The cofactor is Mg(2+).

It is found in the cell projection. Its subcellular location is the cilium. The protein localises to the cytoplasm. The protein resides in the cytoskeleton. It localises to the cilium basal body. It is found in the nucleus. The enzyme catalyses L-glutamyl-[protein] + L-glutamate + ATP = gamma-L-glutamyl-L-glutamyl-[protein] + ADP + phosphate + H(+). It carries out the reaction (L-glutamyl)(n)-gamma-L-glutamyl-L-glutamyl-[protein] + L-glutamate + ATP = (L-glutamyl)(n+1)-gamma-L-glutamyl-L-glutamyl-[protein] + ADP + phosphate + H(+). Polyglutamylase which modifies tubulin, generating polyglutamate side chains on the gamma-carboxyl group of specific glutamate residues within the C-terminal tail of tubulin. Preferentially mediates ATP-dependent initiation step of the polyglutamylation reaction over the elongation step. Preferentially modifies the alpha-tubulin tail over a beta-tail. Required for CCSAP localization to both polyglutamylated spindle and cilia microtubules. Increases the effects of transcriptional coactivator NCOA2/TIF2 in glucocorticoid receptor-mediated repression and induction and in androgen receptor-mediated induction. The chain is Tubulin polyglutamylase TTLL5 (TTLL5) from Pongo abelii (Sumatran orangutan).